Consider the following 292-residue polypeptide: NAD kinase (292 aa).

Asp73 acts as the Proton acceptor in catalysis. NAD(+)-binding positions include 73 to 74 (DG), 147 to 148 (NE), His158, Arg175, Asp177, 188 to 193 (TAYSLS), and Gln247.

The protein belongs to the NAD kinase family. A divalent metal cation is required as a cofactor.

Its subcellular location is the cytoplasm. It carries out the reaction NAD(+) + ATP = ADP + NADP(+) + H(+). Its function is as follows. Involved in the regulation of the intracellular balance of NAD and NADP, and is a key enzyme in the biosynthesis of NADP. Catalyzes specifically the phosphorylation on 2'-hydroxyl of the adenosine moiety of NAD to yield NADP. The chain is NAD kinase from Klebsiella pneumoniae subsp. pneumoniae (strain ATCC 700721 / MGH 78578).